The primary structure comprises 419 residues: 3-isopropylmalate dehydratase large subunit (419 aa).

[4Fe-4S] cluster contacts are provided by cysteine 302, cysteine 362, and cysteine 365.

It belongs to the aconitase/IPM isomerase family. LeuC type 2 subfamily. In terms of assembly, heterodimer of LeuC and LeuD. The cofactor is [4Fe-4S] cluster.

It carries out the reaction (2R,3S)-3-isopropylmalate = (2S)-2-isopropylmalate. It participates in amino-acid biosynthesis; L-leucine biosynthesis; L-leucine from 3-methyl-2-oxobutanoate: step 2/4. Catalyzes the isomerization between 2-isopropylmalate and 3-isopropylmalate, via the formation of 2-isopropylmaleate. The chain is 3-isopropylmalate dehydratase large subunit from Sulfurimonas denitrificans (strain ATCC 33889 / DSM 1251) (Thiomicrospira denitrificans (strain ATCC 33889 / DSM 1251)).